The chain runs to 373 residues: Probable pectin lyase D (373 aa).

A signal peptide spans 1 to 24 (MKYAAALTAVAALAARAAAVGVSG). 2 disulfides stabilise this stretch: cysteine 82–cysteine 101 and cysteine 91–cysteine 225. Asparagine 128 is a glycosylation site (N-linked (GlcNAc...) asparagine). The active site involves arginine 255. Asparagine 274 carries an N-linked (GlcNAc...) asparagine glycan. An intrachain disulfide couples cysteine 321 to cysteine 329. The N-linked (GlcNAc...) asparagine glycan is linked to asparagine 348. Positions 354 to 366 (LPSADAASTSPAS) are enriched in low complexity. The segment at 354–373 (LPSADAASTSPASNAGQGNL) is disordered.

It belongs to the polysaccharide lyase 1 family.

The protein resides in the secreted. The catalysed reaction is Eliminative cleavage of (1-&gt;4)-alpha-D-galacturonan methyl ester to give oligosaccharides with 4-deoxy-6-O-methyl-alpha-D-galact-4-enuronosyl groups at their non-reducing ends.. Its function is as follows. Pectinolytic enzymes consist of four classes of enzymes: pectin lyase, polygalacturonase, pectin methylesterase and rhamnogalacturonase. Among pectinolytic enzymes, pectin lyase is the most important in depolymerization of pectin, since it cleaves internal glycosidic bonds of highly methylated pectins. The sequence is that of Probable pectin lyase D (pelD) from Aspergillus niger (strain ATCC MYA-4892 / CBS 513.88 / FGSC A1513).